We begin with the raw amino-acid sequence, 436 residues long: Protein translocase subunit SecY (436 aa).

Helical transmembrane passes span 18–38 (IAFT…PATG), 69–89 (LLQV…SIIV), 116–138 (YTRY…LART), 154–174 (ILTV…VMWF), 187–207 (MSLL…GQVV), 214–234 (VFAI…FVEE), 266–286 (MANV…GILI), 314–334 (PVYM…YVSI), 375–395 (VVGA…FAVI), and 396–416 (GTSQ…GVGL).

This sequence belongs to the SecY/SEC61-alpha family. In terms of assembly, component of the Sec protein translocase complex. Heterotrimer consisting of SecY, SecE and SecG subunits. The heterotrimers can form oligomers, although 1 heterotrimer is thought to be able to translocate proteins. Interacts with the ribosome. Interacts with SecDF, and other proteins may be involved. Interacts with SecA.

The protein resides in the cell membrane. Functionally, the central subunit of the protein translocation channel SecYEG. Consists of two halves formed by TMs 1-5 and 6-10. These two domains form a lateral gate at the front which open onto the bilayer between TMs 2 and 7, and are clamped together by SecE at the back. The channel is closed by both a pore ring composed of hydrophobic SecY resides and a short helix (helix 2A) on the extracellular side of the membrane which forms a plug. The plug probably moves laterally to allow the channel to open. The ring and the pore may move independently. This chain is Protein translocase subunit SecY, found in Micrococcus luteus (Micrococcus lysodeikticus).